The chain runs to 81 residues: Trefoil factor 3 (81 aa).

An N-terminal signal peptide occupies residues 1 to 22 (METRALWLMLLVVLVAGSSGIA). Residues 31-74 (SQCMVPANVRVDCGYPSVTSEQCNNRGCCFDSSIPNVPWCFKPL) enclose the P-type domain. Intrachain disulfides connect Cys33-Cys59, Cys43-Cys58, and Cys53-Cys70.

Monomer. Homodimer; disulfide-linked. As to expression, expressed in goblet cells of the intestines and colon (at protein level). Expressed abundantly in goblet cells of intestine and colon, and at low levels in stomach. No expression in brain, lung, spleen, kidney, uterus, pancreas, liver, heart or thymus.

The protein localises to the secreted. Its subcellular location is the extracellular space. The protein resides in the extracellular matrix. It localises to the cytoplasm. Involved in the maintenance and repair of the intestinal mucosa. Promotes the mobility of epithelial cells in healing processes (motogen). This chain is Trefoil factor 3 (Tff3), found in Mus musculus (Mouse).